We begin with the raw amino-acid sequence, 208 residues long: Uracil phosphoribosyltransferase (208 aa).

5-phospho-alpha-D-ribose 1-diphosphate-binding positions include Arg-78, Arg-103, and 130–138; that span reads DPMLATGGS. Residues Ile-193 and 198–200 each bind uracil; that span reads GDA. Asp-199 is a 5-phospho-alpha-D-ribose 1-diphosphate binding site.

Belongs to the UPRTase family. Requires Mg(2+) as cofactor.

It carries out the reaction UMP + diphosphate = 5-phospho-alpha-D-ribose 1-diphosphate + uracil. It participates in pyrimidine metabolism; UMP biosynthesis via salvage pathway; UMP from uracil: step 1/1. Its activity is regulated as follows. Allosterically activated by GTP. Its function is as follows. Catalyzes the conversion of uracil and 5-phospho-alpha-D-ribose 1-diphosphate (PRPP) to UMP and diphosphate. This chain is Uracil phosphoribosyltransferase, found in Escherichia coli O139:H28 (strain E24377A / ETEC).